A 938-amino-acid polypeptide reads, in one-letter code: MSDYKSTLNLPETGFPMRGDLAKREPGMLARWTDDDLYGIIRAAKKGKKTFILHDGPPYANGSIHIGHSVNKILKDIIVKSKGLSGYDSPYVPGWDCHGLPIELKVEQEYGKPGEKFTAAEFRAKCREYAATQVDGQRKDFIRLGVLGDWSHPYLTMDFKTEANIIRALGKIIGNGHLHKGAKPVHWCVDCRSALAEAEVEYYDKTSPSIDVAFQAIDQDALKAKFAVSNVNGPISLVIWTTTPWTLPANRAISIAPDFDYALVQIDSQAVILAKDLVESVMQRIGVTDYTILGTVKGAELELLRFTHPFMGFDVPAILGDHVTLDAGTGAVHTAPGHGPDDYVIGQKYGLETANPVGPDGTYLPGTYPTLDGVNVFKANDIVVALLQEKGALLHVEKMQHSYPCCWRHKTPIIFRATPQWFVSMDQKGLRAQSLKEIKGVQWIPDWGQARIESMVANRPDWCISRQRTWGVPMSLFVHKDTEELHPRTLELMEEVAKRVEVDGIQAWWDLDAKELLGDEADQYVKVPDTLDVWFDSGSTHSSVVDVRPEFAGHAADMYLEGSDQHRGWFMSSLMISTAMKGKAPYRQVLTHGFTVDGQGRKMSKSIGNTVSPQDVMNKLGADILRLWVASTDYTGEMAVSDEILKRAADSYRRIRNTARFLLANLNGFDPAKDMVKPEEMVVLDRWAVGCAKAAQEDILKAYEAYDFHEVVQRLMRFCSVEMGSFYLDIIKDRQYTAKADSVARRSCQTALYHIAEALVRWMAPILSFTADEVWGYLPGEREKYVFTGEWYEGLFGLADSEAMNDAFWDELLKVRGEVNKVIEQARADKKVGGSLEAAVTLYAEPELAAKLTALGDELRFVLLTSGATVADYNDAPADAQQSEVLKGLKVALSKAEGEKCPRCWHYTQDVGKVAEHAEICGRCVSNVAGDGEKRKFA.

The short motif at 58 to 68 is the 'HIGH' region element; it reads PYANGSIHIGH. K183 is subject to N6-acetyllysine. Position 561 (E561) interacts with L-isoleucyl-5'-AMP. The short motif at 602–606 is the 'KMSKS' region element; that stretch reads KMSKS. K605 lines the ATP pocket. 4 residues coordinate Zn(2+): C901, C904, C921, and C924.

It belongs to the class-I aminoacyl-tRNA synthetase family. IleS type 1 subfamily. In terms of assembly, monomer. Zn(2+) is required as a cofactor.

It is found in the cytoplasm. The catalysed reaction is tRNA(Ile) + L-isoleucine + ATP = L-isoleucyl-tRNA(Ile) + AMP + diphosphate. In terms of biological role, catalyzes the attachment of isoleucine to tRNA(Ile). As IleRS can inadvertently accommodate and process structurally similar amino acids such as valine, to avoid such errors it has two additional distinct tRNA(Ile)-dependent editing activities. One activity is designated as 'pretransfer' editing and involves the hydrolysis of activated Val-AMP. The other activity is designated 'posttransfer' editing and involves deacylation of mischarged Val-tRNA(Ile). This is Isoleucine--tRNA ligase from Shigella dysenteriae serotype 1 (strain Sd197).